The chain runs to 97 residues: Aspartyl/glutamyl-tRNA(Asn/Gln) amidotransferase subunit C (97 aa).

This sequence belongs to the GatC family. As to quaternary structure, heterotrimer of A, B and C subunits.

It carries out the reaction L-glutamyl-tRNA(Gln) + L-glutamine + ATP + H2O = L-glutaminyl-tRNA(Gln) + L-glutamate + ADP + phosphate + H(+). The enzyme catalyses L-aspartyl-tRNA(Asn) + L-glutamine + ATP + H2O = L-asparaginyl-tRNA(Asn) + L-glutamate + ADP + phosphate + 2 H(+). Its function is as follows. Allows the formation of correctly charged Asn-tRNA(Asn) or Gln-tRNA(Gln) through the transamidation of misacylated Asp-tRNA(Asn) or Glu-tRNA(Gln) in organisms which lack either or both of asparaginyl-tRNA or glutaminyl-tRNA synthetases. The reaction takes place in the presence of glutamine and ATP through an activated phospho-Asp-tRNA(Asn) or phospho-Glu-tRNA(Gln). The polypeptide is Aspartyl/glutamyl-tRNA(Asn/Gln) amidotransferase subunit C (Synechococcus sp. (strain CC9902)).